The following is a 70-amino-acid chain: Conotoxin Vc6.10 (70 aa).

Residues 1 to 19 (MEKLTILLLVAAVLTSTQA) form the signal peptide. Positions 20-40 (LIQGGADERQKAKINFLSRSD) are excised as a propeptide. Disulfide bonds link Cys-43–Cys-57, Cys-50–Cys-62, and Cys-56–Cys-69.

This sequence belongs to the conotoxin O2 superfamily. In terms of tissue distribution, expressed by the venom duct.

It is found in the secreted. Its function is as follows. Inhibits voltage-gated ion channels. The sequence is that of Conotoxin Vc6.10 from Conus victoriae (Queen Victoria cone).